Here is an 836-residue protein sequence, read N- to C-terminus: Serine/threonine-protein kinase ppk5 (836 aa).

Disordered stretches follow at residues 1–29, 192–214, 230–307, and 328–381; these read MVGLISTSETLPKQESKSSSAPVSNFLSP, INQLDETPGGTNYPMNKKKTLSS, CSQF…YKSI, and TPLD…ERQN. Polar residues-rich tracts occupy residues 192 to 205, 232 to 241, and 265 to 288; these read INQLDETPGGTNYP, QFASPRSSIV, and KPSNFNNNIQSSSYGHASQSTKLT. Residues 289–298 show a composition bias toward basic and acidic residues; sequence SQRDNDHQKD. Over residues 338-347 the composition is skewed to basic residues; that stretch reads SGKKFNKNSK. Low complexity predominate over residues 353-362; that stretch reads STISSYSSAS. One can recognise a Protein kinase domain in the interval 518–814; sequence YEIIDTVGKG…VDSALQHEFI (297 aa). ATP is bound by residues 524-532 and lysine 547; that span reads VGKGSFGQV. The Proton acceptor role is filled by aspartate 644. Tyrosine 678 bears the Phosphotyrosine mark.

This sequence belongs to the protein kinase superfamily. CMGC Ser/Thr protein kinase family. MNB/DYRK subfamily.

Its subcellular location is the cytoplasm. The enzyme catalyses L-seryl-[protein] + ATP = O-phospho-L-seryl-[protein] + ADP + H(+). The catalysed reaction is L-threonyl-[protein] + ATP = O-phospho-L-threonyl-[protein] + ADP + H(+). Its function is as follows. Has a role in meiosis. The chain is Serine/threonine-protein kinase ppk5 (ppk5) from Schizosaccharomyces pombe (strain 972 / ATCC 24843) (Fission yeast).